Reading from the N-terminus, the 1816-residue chain is Kinesin-like protein KIF1B (1816 aa).

Position 2 is an N-acetylserine (Ser-2). The Kinesin motor domain maps to 5–354; it reads SVKVAVRVRP…LRYADRAKQI (350 aa). 97–104 serves as a coordination point for ATP; it reads GQTGAGKS. Positions 270–350 are interaction with KIFBP; sequence NINKSLTTLG…TLSTLRYADR (81 aa). The segment at 431–450 is disordered; the sequence is FSTASMGSLTSSPSSCSLNS. Over residues 432–450 the composition is skewed to low complexity; sequence STASMGSLTSSPSSCSLNS. Residues 470 to 512 are a coiled coil; it reads GEEAIERLKESEKIIAELNETWEEKLRKTEAIRMEREALLAEM. The region spanning 556 to 612 is the FHA domain; it reads TRVGQADAERRQDIVLSGAHIKEEHCIFRSERNNTGEVIVTLEPCERSETYVNGKRV. Phosphothreonine is present on residues Thr-647 and Thr-652. Residues 672 to 731 adopt a coiled-coil conformation; sequence IDMKQEMEKRLQEMEILYKREKEEADLLLEQQRLDYESKLQALQKQVETRSLAAETTEEE. Phosphoserine is present on residues Ser-1054, Ser-1057, Ser-1416, Ser-1454, and Ser-1487. The segment at 1550 to 1570 is disordered; the sequence is STTTFESAITPSESSGYDSAD. Ser-1573, Ser-1603, Ser-1610, and Ser-1613 each carry phosphoserine. Positions 1620 to 1637 are enriched in low complexity; it reads SVSSFSSSTLTPSSTCPS. Residues 1620–1659 are disordered; sequence SVSSFSSSTLTPSSTCPSLVDSRSSSMDQKTPEANSRASS. The segment covering 1640–1659 has biased composition (polar residues); that stretch reads DSRSSSMDQKTPEANSRASS. In terms of domain architecture, PH spans 1701 to 1799; sequence VVSKKGYLHF…WLYAFNPLLA (99 aa).

The protein belongs to the TRAFAC class myosin-kinesin ATPase superfamily. Kinesin family. Unc-104 subfamily. In terms of assembly, monomer. Interacts with KIFBP; positively regulates KIF1B microtubule motor activity. Interacts (via C-terminus end of the kinesin-motor domain) with CHP1; the interaction occurs in a calcium-dependent manner. Interacts with MADD (via death domain); links this isoform of KIF1B to Rab3-carrying vesicles in anterograde synaptic vesicle transport. In terms of tissue distribution, expressed in the brain with lower expression in testis and liver (at protein level). Strongly expressed in the brain and ovary, with lower expression in lung, kidney, uterus, testis and liver. As to expression, isoform 2 is expressed in non-neuronal tissues.

It is found in the cytoplasm. It localises to the cytoskeleton. Its subcellular location is the cytoplasmic vesicle. The protein localises to the secretory vesicle. The protein resides in the synaptic vesicle membrane. It is found in the lysosome. It catalyses the reaction ATP + H2O + a kinesin associated with a microtubule at position (n) = ADP + phosphate a kinesin associated with a microtubule at position (n+1, toward the plus end).. In terms of biological role, has a plus-end-directed microtubule motor activity and functions as a motor for transport of vesicles and organelles along microtubules. Functionally, has a plus-end-directed microtubule motor activity and functions as a motor for anterograde synaptic vesicle transport along axonal microtubules from the cell body to the presynapse in neuronal cells. Has a plus-end-directed microtubule motor activity and functions as a motor for the translocation of lysosomes from perinuclear regions to the cell periphery. The chain is Kinesin-like protein KIF1B from Rattus norvegicus (Rat).